The primary structure comprises 163 residues: Nucleotide-binding protein YPDSF_2805 (163 aa).

It belongs to the YajQ family.

Functionally, nucleotide-binding protein. This is Nucleotide-binding protein YPDSF_2805 from Yersinia pestis (strain Pestoides F).